Reading from the N-terminus, the 715-residue chain is MSDDESMVLNFSTDTAGIQRADKVTGGRWKDRRKLQQRLGGREPVKRRAEGGDKERGDKRAKVDTGNAQEKKNIPKPVSKADVNINSQIVSSLFTSNRAKQTSENKNKHNSDDKVVPSNAPLTDDSFEGLGVGSLVVSHLENKMRIQKSTSIQKVVIPQILQNADKTDFFIHAQTGSGKTLAYLLPIFSAILGMGDHIDRKSGCFALIIAPTRELASQIYHVTTMLANCCHYLVPCLLIGGERKKSEKARLRKGCNFIIGTPGRILDHFQNTKVIKEQMQSSLRYVVLDEGDKLMELGFEETINQIMEIVNSMDVITRKYPKLPNRIVHLLCSATKNNEVAKLSKRSLDNYKVISIGGKKDTMMDNTSVPDQLLQKVVIAPPKLRLITLAGVLDGIQKKPLDAGSVAKRTIVFLSCADSVDYHFEVFSGNDGLYKNLVGDSVRVLSKGNKILPSIKDEELPGIICYKLHGSLSQQMRTMTLKHFATDSEQTKGKHLILFCTDVASRGLDLPDVSTVIEFDPPFAVEDHLHRIGRTARAGRSGEALLFLLPGEEEGYLDYIQKYHPKGWDLLDAEKDVLIKAFNDIDVARNDKEIKSTGKTFEWDTNATTWHLNVERRILENEQFKEQATKGYISHVRAYATHISAEKQYFNLKGVHLGHLAKSFGLRDRPKAMGMNSSKDANGNERSKPKKENAKNKMFRMARMAAKQSADEFNY.

Disordered regions lie at residues 1 to 82 and 94 to 121; these read MSDD…SKAD and FTSNRAKQTSENKNKHNSDDKVVPSNAP. 3 stretches are compositionally biased toward basic and acidic residues: residues 20–29, 40–73, and 101–115; these read RADKVTGGRW, GGREPVKRRAEGGDKERGDKRAKVDTGNAQEKKN, and QTSENKNKHNSDDKV. The short motif at 125–154 is the Q motif element; it reads DSFEGLGVGSLVVSHLENKMRIQKSTSIQK. Positions 160 to 354 constitute a Helicase ATP-binding domain; sequence ILQNADKTDF…KRSLDNYKVI (195 aa). Position 173–180 (173–180) interacts with ATP; it reads AQTGSGKT. The DEAD box signature appears at 289–292; sequence DEGD. In terms of domain architecture, Helicase C-terminal spans 400-586; sequence PLDAGSVAKR…VLIKAFNDID (187 aa). The interval 668-698 is disordered; it reads DRPKAMGMNSSKDANGNERSKPKKENAKNKM. The segment covering 682–695 has biased composition (basic and acidic residues); it reads NGNERSKPKKENAK.

It belongs to the DEAD box helicase family. DDX31/DBP7 subfamily.

The protein resides in the nucleus. Its subcellular location is the nucleolus. The enzyme catalyses ATP + H2O = ADP + phosphate + H(+). Its function is as follows. ATP-binding RNA helicase involved in the biogenesis of 60S ribosomal subunits and is required for the normal formation of 25S and 5.8S rRNAs. This Candida glabrata (strain ATCC 2001 / BCRC 20586 / JCM 3761 / NBRC 0622 / NRRL Y-65 / CBS 138) (Yeast) protein is ATP-dependent RNA helicase DBP7 (DBP7).